Reading from the N-terminus, the 477-residue chain is Bifunctional protein HldE (477 aa).

Positions 1–318 (MKVTLPEFER…ENAVRGRAET (318 aa)) are ribokinase. 195 to 198 (NLSE) serves as a coordination point for ATP. Residue aspartate 264 is part of the active site. Residues 344 to 477 (MTNGVFDILH…IKKIQKDSDK (134 aa)) are cytidylyltransferase.

The protein in the N-terminal section; belongs to the carbohydrate kinase PfkB family. It in the C-terminal section; belongs to the cytidylyltransferase family. In terms of assembly, homodimer.

It carries out the reaction D-glycero-beta-D-manno-heptose 7-phosphate + ATP = D-glycero-beta-D-manno-heptose 1,7-bisphosphate + ADP + H(+). The enzyme catalyses D-glycero-beta-D-manno-heptose 1-phosphate + ATP + H(+) = ADP-D-glycero-beta-D-manno-heptose + diphosphate. The protein operates within nucleotide-sugar biosynthesis; ADP-L-glycero-beta-D-manno-heptose biosynthesis; ADP-L-glycero-beta-D-manno-heptose from D-glycero-beta-D-manno-heptose 7-phosphate: step 1/4. Its pathway is nucleotide-sugar biosynthesis; ADP-L-glycero-beta-D-manno-heptose biosynthesis; ADP-L-glycero-beta-D-manno-heptose from D-glycero-beta-D-manno-heptose 7-phosphate: step 3/4. Catalyzes the phosphorylation of D-glycero-D-manno-heptose 7-phosphate at the C-1 position to selectively form D-glycero-beta-D-manno-heptose-1,7-bisphosphate. In terms of biological role, catalyzes the ADP transfer from ATP to D-glycero-beta-D-manno-heptose 1-phosphate, yielding ADP-D-glycero-beta-D-manno-heptose. The sequence is that of Bifunctional protein HldE from Klebsiella pneumoniae subsp. pneumoniae (strain ATCC 700721 / MGH 78578).